Reading from the N-terminus, the 886-residue chain is Cytosolic carboxypeptidase-like protein 5 (886 aa).

The Peptidase M14 domain occupies Y157–A570. Positions 252 and 255 each coordinate Zn(2+). Polar residues predominate over residues A344–T353. Disordered regions lie at residues A344–S363 and E374–P401. H434 lines the Zn(2+) pocket. Catalysis depends on E516, which acts as the Proton donor/acceptor. Disordered stretches follow at residues G602 to G737 and T783 to S846. Residues P621–A635 show a composition bias toward polar residues. Over residues S643–S654 the composition is skewed to low complexity. Residues Q655 to S666 show a composition bias toward polar residues. Low complexity predominate over residues S714 to G737. Polar residues predominate over residues S805–R815. S841 is modified (phosphoserine).

This sequence belongs to the peptidase M14 family. Zn(2+) serves as cofactor. Widely expressed. Highly expressed in testis, and moderately in pituitary, brain, eye and kidney.

The protein localises to the cytoplasm. The protein resides in the cytosol. It localises to the nucleus. It is found in the cytoskeleton. Its subcellular location is the spindle. The protein localises to the midbody. The catalysed reaction is gamma-L-glutamyl-L-glutamyl-[protein] + H2O = L-glutamyl-[protein] + L-glutamate. It catalyses the reaction (L-glutamyl)(n+1)-gamma-L-glutamyl-L-glutamyl-[protein] + H2O = (L-glutamyl)(n)-gamma-L-glutamyl-L-glutamyl-[protein] + L-glutamate. The enzyme catalyses C-terminal L-alpha-aminoacyl-L-glutamyl-[tubulin] + H2O = C-terminal L-alpha-aminoacyl-[tubulin] + L-glutamate. It carries out the reaction C-terminal L-alpha-aminoacyl-L-glutamyl-L-glutamyl-[tubulin] + H2O = C-terminal L-alpha-aminoacyl-L-glutamyl-[tubulin] + L-glutamate. Functionally, metallocarboxypeptidase that mediates deglutamylation of tubulin and non-tubulin target proteins. Catalyzes the removal of polyglutamate side chains present on the gamma-carboxyl group of glutamate residues within the C-terminal tail of alpha- and beta-tubulin. Cleaves alpha- and gamma-linked polyglutamate tubulin side-chain, as well as the branching point glutamate. Also catalyzes the removal of alpha-linked glutamate residues from the carboxy-terminus of alpha-tubulin. Mediates deglutamylation of nucleotidyltransferase CGAS, leading to CGAS antiviral defense response activation. This Mus musculus (Mouse) protein is Cytosolic carboxypeptidase-like protein 5.